The sequence spans 484 residues: Aldehyde dehydrogenase family 3 member H1 (484 aa).

An NAD(+)-binding site is contributed by 196–201 (GSSKIG). E218 serves as the catalytic Proton acceptor. C253 (nucleophile) is an active-site residue.

Belongs to the aldehyde dehydrogenase family. Homodimer and homomultimer. As to expression, isoform alpha is expressed in expanded leaves and flowers. Detected in seedlings. Isoform beta is mainly expressed in flowers. Detected in leaves and seedlings.

The enzyme catalyses an aldehyde + NAD(+) + H2O = a carboxylate + NADH + 2 H(+). Its activity is regulated as follows. Thiol-based regulation. Inactivation after dimerization under oxidizing conditions. Functionally, involved in oxidative stress tolerance by detoxifying reactive aldehydes derived from lipid peroxidation. Medium- to long-chain saturated aldehydes are preferred substrates, while the short-chain aldehyde propanal is a weak substrate. Is strictely NAD(+) specific. This is Aldehyde dehydrogenase family 3 member H1 (ALDH3H1) from Arabidopsis thaliana (Mouse-ear cress).